The sequence spans 268 residues: Large ribosomal subunit protein uL3 (268 aa).

Q156 is modified (N5-methylglutamine). The segment covering 242–259 has biased composition (low complexity); the sequence is VENEAAPADADNAAPEAA. The segment at 242–268 is disordered; sequence VENEAAPADADNAAPEAAADGEEGTQA.

It belongs to the universal ribosomal protein uL3 family. Part of the 50S ribosomal subunit. Forms a cluster with proteins L14 and L19. Post-translationally, methylated by PrmB.

Functionally, one of the primary rRNA binding proteins, it binds directly near the 3'-end of the 23S rRNA, where it nucleates assembly of the 50S subunit. This Maricaulis maris (strain MCS10) (Caulobacter maris) protein is Large ribosomal subunit protein uL3.